A 634-amino-acid chain; its full sequence is Endoribonuclease rege-1 (634 aa).

Disordered stretches follow at residues 1–33 (MDSTARGHAPLCRTSNQRGLGTRLNPYYQSTPH), 90–113 (SHPSLSRESSDPSKIDDDQTAPMI), and 156–223 (KMGL…NPDP). The span at 97-106 (ESSDPSKIDD) shows a compositional bias: basic and acidic residues. 2 stretches are compositionally biased toward low complexity: residues 182–194 (SSASSSSASSSSS) and 201–217 (SVSIATSSPATSSSTPS). The RNase NYN domain maps to 225-377 (LRAVVVDGSN…PSGRHGPRIE (153 aa)). Asp314 is a binding site for Mg(2+). The C3H1-type zinc-finger motif lies at 387 to 412 (SSNPLVCPYARKCTYGNKCKFYHPER).

It belongs to the ZC3H12 family. Mg(2+) serves as cofactor. Expressed in the intestinal cells adjacent to the pharynx.

The protein resides in the cytoplasm. Functionally, endonuclease which binds to the 3'UTR of target mRNAs and induces degradation of the transcript. Acts together with rle-1 to repress the expression of the transcription factor ets-4 by binding to the conserved ADE (alternate decay element) and RCE (REGE-1 cleavage element) stem loop structure in its 3'UTR, which controls the expression of genes in the IIS and TORC1 pathways, including those involved in lipid metabolism and autophagosome formation. May play a role in the clearance of apoptotic cell corpses. This is Endoribonuclease rege-1 from Caenorhabditis elegans.